Here is a 538-residue protein sequence, read N- to C-terminus: CTP synthase (538 aa).

The interval 1 to 266 (MRTKYIFITG…DQKIVDLLNI (266 aa)) is amidoligase domain. Ser-14 is a CTP binding site. Ser-14 contributes to the UTP binding site. ATP contacts are provided by residues 15 to 20 (SLGKGL) and Asp-72. Positions 72 and 140 each coordinate Mg(2+). CTP is bound by residues 147-149 (DIE), 187-192 (KTKPTQ), and Lys-223. UTP contacts are provided by residues 187-192 (KTKPTQ) and Lys-223. 239–241 (KDV) provides a ligand contact to ATP. Positions 291 to 533 (NIAIVGKYVN…IEAALRYRKK (243 aa)) constitute a Glutamine amidotransferase type-1 domain. An L-glutamine-binding site is contributed by Gly-353. The Nucleophile; for glutamine hydrolysis role is filled by Cys-380. L-glutamine contacts are provided by residues 381–384 (LGMQ), Glu-404, and Arg-461. Catalysis depends on residues His-506 and Glu-508.

It belongs to the CTP synthase family. As to quaternary structure, homotetramer.

It carries out the reaction UTP + L-glutamine + ATP + H2O = CTP + L-glutamate + ADP + phosphate + 2 H(+). The enzyme catalyses L-glutamine + H2O = L-glutamate + NH4(+). It catalyses the reaction UTP + NH4(+) + ATP = CTP + ADP + phosphate + 2 H(+). It functions in the pathway pyrimidine metabolism; CTP biosynthesis via de novo pathway; CTP from UDP: step 2/2. Allosterically activated by GTP, when glutamine is the substrate; GTP has no effect on the reaction when ammonia is the substrate. The allosteric effector GTP functions by stabilizing the protein conformation that binds the tetrahedral intermediate(s) formed during glutamine hydrolysis. Inhibited by the product CTP, via allosteric rather than competitive inhibition. Its function is as follows. Catalyzes the ATP-dependent amination of UTP to CTP with either L-glutamine or ammonia as the source of nitrogen. Regulates intracellular CTP levels through interactions with the four ribonucleotide triphosphates. In Syntrophus aciditrophicus (strain SB), this protein is CTP synthase.